Consider the following 345-residue polypeptide: MDGEDIPDFSSLKEETAYWKELSLKYKQSFQEARDELVEFQEGSRELEAELEAQLVQAEQRNRDLQADNQRLKYEVEALKEKLEHQYAQSYKQVSVLEDDLSQTRAIKEQLHKYVRELEQANDDLERAKRATIVSLEDFEQRLNQAIERNAFLESELDEKESLLVSVQRLKDEARDLRQELAVRERQQEVTRKSAPSSPTLDCEKMDSAVQASLSLPATPVGKGTENSFPSPKAIPNGFGTSPLTPSARISALNIVGDLLRKVGALESKLAACRNFAKDQASRKSYVPGSVNCGVMNSNGPECPRSGRATFFHKGAVNGFDPAPPPPGLGSSRPSSAPGMLPLSV.

Positions 28–190 form a coiled coil; that stretch reads QSFQEARDEL…LAVRERQQEV (163 aa). Residues 56-166 are self-association; it reads VQAEQRNRDL…LDEKESLLVS (111 aa). The segment at 64–189 is interaction with KATNB1; it reads DLQADNQRLK…ELAVRERQQE (126 aa). The interval 114–133 is required for interaction with PAFAH1B1; the sequence is YVRELEQANDDLERAKRATI. The segment at 175–345 is interaction with CENPF; it reads RDLRQELAVR…SAPGMLPLSV (171 aa). The interval 189-256 is interaction with YWHAE; sequence EVTRKSAPSS…SARISALNIV (68 aa). The segment at 191–345 is interaction with NEFL; that stretch reads TRKSAPSSPT…SAPGMLPLSV (155 aa). Residues 195-256 form an interaction with KATNA1 region; that stretch reads APSSPTLDCE…SARISALNIV (62 aa). The residue at position 215 (S215) is a Phosphoserine. Residues 217–240 form a disordered region; the sequence is PATPVGKGTENSFPSPKAIPNGFG. At T219 the chain carries Phosphothreonine. At S231 the chain carries Phosphoserine. The interaction with DISC1 stretch occupies residues 241–280; the sequence is TSPLTPSARISALNIVGDLLRKVGALESKLAACRNFAKDQ. A Phosphoserine; by CDK1 modification is found at S242. At T245 the chain carries Phosphothreonine; by CDK1 and MAPK1. The segment at 256 to 291 is required for localization to the centrosome and interaction with dynein, dynactin, tubulin gamma, PCM1 and PCNT; sequence VGDLLRKVGALESKLAACRNFAKDQASRKSYVPGSV. A lipid anchor (S-palmitoyl cysteine; by ZDHHC2, ZDHHC3 and ZDHHC7) is attached at C273. The tract at residues 314–345 is disordered; sequence KGAVNGFDPAPPPPGLGSSRPSSAPGMLPLSV. Residues 329 to 339 show a composition bias toward low complexity; that stretch reads LGSSRPSSAPG. Position 344 is a phosphoserine (S344).

The protein belongs to the nudE family. Interacts with PLEKHM1 (via N- and C-terminus). Interacts with dynactin, PCM1 and PCNT. Interacts (via C-terminus) with CENPF. Self-associates. Interacts with DISC1, dynein, tubulin gamma, KATNA1, KATNB1, microtubules, PAFAHB1 and YWHAE. Interacts directly with NEFL and indirectly with NEFH. Interacts with ZNF365. Interacts with GTP-bound RAB9A; the interaction may lead to RAB9A-dynein motor tethering. Phosphorylated by CDK1 and MAPK1. Phosphorylated in mitosis. Phosphorylated by CDK5. Phosphorylation by CDK5 promotes interaction with KATNA1 and YWHAE. Post-translationally, palmitoylation at Cys-273 reduces affinity for dynein. Expressed in brain, liver, lung and testis (at protein level). Expressed in brain, epididymis, eye, heart, kidney, large intestine, liver, ovary, pancreas, prostate, skeletal muscle, smooth muscle, spleen, submaxillary gland, testis, thymus and thyroid. Within the brain expression is pronounced in the cortex, hippocampus, olfactory bulb, striatum, thalamic and hypothalamic structures and in the molecular layer of the cerebellum. Largely excluded from cortical progenitor cells which express NDE1.

It is found in the cytoplasm. Its subcellular location is the cytoskeleton. The protein resides in the microtubule organizing center. It localises to the centrosome. The protein localises to the chromosome. It is found in the centromere. Its subcellular location is the kinetochore. The protein resides in the spindle. Functionally, required for organization of the cellular microtubule array and microtubule anchoring at the centrosome. May regulate microtubule organization at least in part by targeting the microtubule severing protein KATNA1 to the centrosome. Also positively regulates the activity of the minus-end directed microtubule motor protein dynein. May enhance dynein-mediated microtubule sliding by targeting dynein to the microtubule plus ends. Required for several dynein- and microtubule-dependent processes such as the maintenance of Golgi integrity, the centripetal motion of secretory vesicles and the coupling of the nucleus and centrosome. Also required during brain development for the migration of newly formed neurons from the ventricular/subventricular zone toward the cortical plate. Plays a role, together with DISC1, in the regulation of neurite outgrowth. Required for mitosis in some cell types but appears to be dispensible for mitosis in cortical neuronal progenitors, which instead requires NDE1. Facilitates the polymerization of neurofilaments from the individual subunits NEFH and NEFL. Positively regulates lysosome peripheral distribution and ruffled border formation in osteoclasts. Plays a role, together with DISC1, in the regulation of neurite outgrowth. May act as a RAB9A/B effector that tethers RAB9-associated late endosomes to the dynein motor for their retrograde transport to the trans-Golgi network. This Mus musculus (Mouse) protein is Nuclear distribution protein nudE-like 1.